A 259-amino-acid polypeptide reads, in one-letter code: Oxidase ustYb (259 aa).

A helical membrane pass occupies residues 36 to 56; that stretch reads IIYTSLAFVGFIEILFFGIFF. 2 N-linked (GlcNAc...) asparagine glycosylation sites follow: asparagine 102 and asparagine 122. 2 consecutive short sequence motifs (HXXHC) follow at residues 147-151 and 197-201; these read HQLHC and HVDHC.

It belongs to the ustYa family.

The protein resides in the membrane. Its pathway is mycotoxin biosynthesis. Its function is as follows. Oxidase; part of the gene cluster that mediates the biosynthesis of the secondary metabolite ustiloxin B, an antimitotic tetrapeptide. First, ustA is processed by the subtilisin-like endoprotease Kex2 that is outside the ustiloxin B gene cluster, at the C-terminal side of Arg-Lys, after transfer to Golgi apparatus through the endoplasmic reticulum (ER). Cleavage by KEX2 generates 16 peptides YAIG-I to YAIG-XVI. To process the precursor peptide further, at least two peptidases are necessary to cleave the N-terminal and C-terminal sides of the Tyr-Ala-Ile-Gly core peptide which serves as backbone for the synthesis of ustiloxin B, through cyclization and modification of the tyrosine with a non-protein coding amino acid, norvaline. One of the two peptidases must be the serine peptidase ustP; and the other pepdidase is probably ustH. Macrocyclization of the core peptide derived from ustA requires the tyrosinase ustQ, as well as the homologous oxidases ustYa and ustYb, and leads to the production of the first cyclization product N-desmethylustiloxin F. For the formation of N-desmethylustiloxin F, three oxidation steps are required, hydroxylation at the benzylic position, hydroxylation at either the aromatic ring of Tyr or beta-position of Ile, and oxidative cyclization. UstQ may catalyze the oxidation of a phenol moiety, whereas the ustYa and ustYb are most likely responsible for the remaining two-step oxidations. N-desmethylustiloxin F is then methylated by ustM to yield ustiloxin F which in turn substrate of the cytochrome P450 monooxygenase ustC which catalyzes the formation of S-deoxyustiloxin H. The flavoprotein monooxygenases ustF1 and ustF2 then participate in the modification of the side chain of S-deoxyustiloxin H, leading to the synthesis of an oxime intermediate, via ustiloxin H. Finally, carboxylative dehydration performed by the cysteine desulfurase-like protein ustD yields ustiloxin B. This is Oxidase ustYb from Aspergillus flavus (strain ATCC 200026 / FGSC A1120 / IAM 13836 / NRRL 3357 / JCM 12722 / SRRC 167).